Consider the following 433-residue polypeptide: Transcriptional enhancer factor TEF-5 (433 aa).

Polar residues predominate over residues 1 to 12 (MASNSWNASSSP). A disordered region spans residues 1-35 (MASNSWNASSSPGEGREDGQDGMDKSLDNDAEGVW). The span at 14-28 (EGREDGQDGMDKSLD) shows a compositional bias: basic and acidic residues. The TEA DNA-binding region spans 28 to 104 (DNDAEGVWSP…QVLARREISG (77 aa)). Residues 171–433 (GPSQDIKPFA…QHHVYKLVKD (263 aa)) form a transcriptional activation region.

High levels in cardiac muscle, low in skeletal muscle. Intermediate levels in gizzard and lung, low levels in kidney.

The protein localises to the nucleus. In terms of biological role, transcription factor which plays a key role in the Hippo signaling pathway, a pathway involved in organ size control and tumor suppression by restricting proliferation and promoting apoptosis. The core of this pathway is composed of a kinase cascade wherein MST1/MST2, in complex with its regulatory protein SAV1, phosphorylates and activates LATS1/2 in complex with its regulatory protein MOB1, which in turn phosphorylates and inactivates YAP1 oncoprotein and WWTR1/TAZ. The polypeptide is Transcriptional enhancer factor TEF-5 (TEAD3) (Gallus gallus (Chicken)).